The primary structure comprises 273 residues: Ribosomal RNA small subunit methyltransferase A (273 aa).

Positions 18, 20, 45, 66, 91, and 113 each coordinate S-adenosyl-L-methionine.

The protein belongs to the class I-like SAM-binding methyltransferase superfamily. rRNA adenine N(6)-methyltransferase family. RsmA subfamily.

The protein localises to the cytoplasm. It catalyses the reaction adenosine(1518)/adenosine(1519) in 16S rRNA + 4 S-adenosyl-L-methionine = N(6)-dimethyladenosine(1518)/N(6)-dimethyladenosine(1519) in 16S rRNA + 4 S-adenosyl-L-homocysteine + 4 H(+). Its function is as follows. Specifically dimethylates two adjacent adenosines (A1518 and A1519) in the loop of a conserved hairpin near the 3'-end of 16S rRNA in the 30S particle. May play a critical role in biogenesis of 30S subunits. This chain is Ribosomal RNA small subunit methyltransferase A, found in Salmonella newport (strain SL254).